A 271-amino-acid polypeptide reads, in one-letter code: Phosphatidylglycerol--prolipoprotein diacylglyceryl transferase (271 aa).

7 consecutive transmembrane segments (helical) span residues 25-45 (WYGI…KFFV), 60-80 (YFIW…ILIY), 103-123 (FVGI…IATL), 134-154 (WIFL…GRIG), 181-201 (PSQF…VYLA), 209-229 (GELI…CEFY), and 235-255 (GIGF…IMFI). Arg-152 is an a 1,2-diacyl-sn-glycero-3-phospho-(1'-sn-glycerol) binding site.

This sequence belongs to the Lgt family.

Its subcellular location is the cell inner membrane. The enzyme catalyses L-cysteinyl-[prolipoprotein] + a 1,2-diacyl-sn-glycero-3-phospho-(1'-sn-glycerol) = an S-1,2-diacyl-sn-glyceryl-L-cysteinyl-[prolipoprotein] + sn-glycerol 1-phosphate + H(+). Its pathway is protein modification; lipoprotein biosynthesis (diacylglyceryl transfer). In terms of biological role, catalyzes the transfer of the diacylglyceryl group from phosphatidylglycerol to the sulfhydryl group of the N-terminal cysteine of a prolipoprotein, the first step in the formation of mature lipoproteins. This chain is Phosphatidylglycerol--prolipoprotein diacylglyceryl transferase, found in Campylobacter jejuni subsp. doylei (strain ATCC BAA-1458 / RM4099 / 269.97).